Here is a 551-residue protein sequence, read N- to C-terminus: Calnexin homolog (551 aa).

A signal peptide spans 1–26; it reads MVDRKEIPLAMGLLAVLLFFVASSSS. Over 27 to 480 the chain is Lumenal; that stretch reads FHLVRASDEV…EKGEKQPNLT (454 aa). 2 residues coordinate Ca(2+): S44 and D75. C118 and C153 are disulfide-bonded. Residues Y122 and K124 each contribute to the an alpha-D-glucoside site. N140 is a glycosylation site (N-linked (GlcNAc...) asparagine). An alpha-D-glucoside-binding residues include Y144 and D151. Residues 226-330 form a disordered region; the sequence is ALIPSKTIPD…CGEWKRPTKS (105 aa). Positions 233–364 are p domain (Extended arm); sequence IPDPDDKKPE…QEIPNPEYFE (132 aa). Basic and acidic residues-rich tracts occupy residues 234 to 269 and 276 to 295; these read PDPD…PREI and KPEP…AKPE. A run of 5 repeats spans residues 235 to 246, 252 to 263, 271 to 282, 289 to 299, and 303 to 313. 4 X approximate repeats regions lie at residues 235 to 299 and 303 to 360; these read DPDD…DWDD and GEWE…IPNP. Acidic residues predominate over residues 296-305; the sequence is DWDDEEDGEW. Cysteines 315 and 321 form a disulfide. Tandem repeats lie at residues 322–332, 336–346, and 350–360. E379 contributes to the an alpha-D-glucoside binding site. Residue D390 coordinates Ca(2+). A glycan (N-linked (GlcNAc...) asparagine) is linked at N478. A helical membrane pass occupies residues 481 to 501; it reads IGIIVSVVIVFVSIFFRLIFG. The Cytoplasmic portion of the chain corresponds to 502–551; that stretch reads GKKPANVEANVEKKKTNTETTSKQDGGEKEDNKEKEETANPPRRRPKRDN. A disordered region spans residues 510–551; the sequence is ANVEKKKTNTETTSKQDGGEKEDNKEKEETANPPRRRPKRDN. Residues 526 to 539 are compositionally biased toward basic and acidic residues; it reads DGGEKEDNKEKEET.

The protein belongs to the calreticulin family. In vegetative and flowering tissues.

The protein localises to the endoplasmic reticulum membrane. Its function is as follows. Calcium-binding protein that interacts with newly synthesized monoglucosylated glycoproteins in the endoplasmic reticulum. It may act in assisting protein assembly and/or in the retention within the ER of unassembled protein subunits. It seems to play a major role in the quality control apparatus of the ER by the retention of incorrectly folded proteins. The chain is Calnexin homolog from Pisum sativum (Garden pea).